We begin with the raw amino-acid sequence, 319 residues long: ATP-dependent 6-phosphofructokinase (319 aa).

Residue Gly-11 coordinates ATP. ADP is bound by residues Arg-21 to Arg-25 and Asp-59. Residues Arg-72–Cys-73 and Gly-102–Ser-105 contribute to the ATP site. Residue Asp-103 coordinates Mg(2+). Thr-125 to Asp-127 provides a ligand contact to substrate. Asp-127 functions as the Proton acceptor in the catalytic mechanism. Arg-154 contributes to the ADP binding site. Substrate-binding positions include Arg-162 and Met-169–Arg-171. ADP contacts are provided by residues Gly-185–Glu-187, Arg-211, and Lys-213–His-215. Substrate contacts are provided by residues Glu-222, Arg-243, and His-249–Arg-252.

Belongs to the phosphofructokinase type A (PFKA) family. ATP-dependent PFK group I subfamily. Prokaryotic clade 'B1' sub-subfamily. In terms of assembly, homotetramer. It depends on Mg(2+) as a cofactor.

Its subcellular location is the cytoplasm. It catalyses the reaction beta-D-fructose 6-phosphate + ATP = beta-D-fructose 1,6-bisphosphate + ADP + H(+). The protein operates within carbohydrate degradation; glycolysis; D-glyceraldehyde 3-phosphate and glycerone phosphate from D-glucose: step 3/4. Allosterically activated by ADP and other diphosphonucleosides, and allosterically inhibited by phosphoenolpyruvate. Catalyzes the phosphorylation of D-fructose 6-phosphate to fructose 1,6-bisphosphate by ATP, the first committing step of glycolysis. The protein is ATP-dependent 6-phosphofructokinase of Geobacillus stearothermophilus (Bacillus stearothermophilus).